The following is a 539-amino-acid chain: Interleukin-2 receptor subunit beta (539 aa).

Residues 1-26 form the signal peptide; sequence MATIALPWSLSLYVFLLLLATPWASA. Topologically, residues 27 to 240 are extracellular; that stretch reads AVKNCSHLEC…RTRPADPMKE (214 aa). N-linked (GlcNAc...) asparagine glycans are attached at residues Asn-30, Asn-43, Asn-55, and Asn-71. Cys-36 and Cys-46 are joined by a disulfide. Residues Cys-74 and Cys-86 are joined by a disulfide bond. In terms of domain architecture, Fibronectin type-III spans 135–235; it reads APHSLQVLHI…QPLTFRTRPA (101 aa). N-linked (GlcNAc...) asparagine glycans are attached at residues Asn-150 and Asn-216. The WSXWS motif motif lies at 221 to 225; that stretch reads WSPWS. The helical transmembrane segment at 241-268 threads the bilayer; it reads ILPMSWLRYLLLVLGCFSGFFSCVYILV. Residues 269 to 539 lie on the Cytoplasmic side of the membrane; that stretch reads KCRYLGPWLK…LQAQDSVHLI (271 aa). Positions 281 to 289 match the Box 1 motif motif; it reads LKCHIPDPS. Disordered regions lie at residues 395–419, 440–465, and 477–516; these read VEED…GEQD, PNTA…LPSL, and LERM…QGPI.

Belongs to the type I cytokine receptor family. Type 4 subfamily. Non-covalent dimer of an alpha and a beta subunit. IL2R exists in 3 different forms: a high affinity dimer, an intermediate affinity monomer (beta subunit), and a low affinity monomer (alpha subunit). The high and intermediate affinity forms also associate with a gamma subunit. Interacts with SHB upon interleukin stimulation.

The protein localises to the cell membrane. It is found in the cell surface. Functionally, receptor for interleukin-2. This beta subunit is involved in receptor mediated endocytosis and transduces the mitogenic signals of IL2. Probably in association with IL15RA, involved in the stimulation of neutrophil phagocytosis by IL15. In Mus musculus (Mouse), this protein is Interleukin-2 receptor subunit beta (Il2rb).